A 574-amino-acid chain; its full sequence is MEELVSCHHLPLLCLQSSVPPNGCLTFFQDSACQRCSHSEFSNGHPLNDVSLQNDVAVNPIVAKSIDPSADLQLLPLLESVKEEPTLSIIVVGASGDLAKKKIFPALFALFYENCLPENFTVFGFSRTEMNDEELRTMISKTLTCRIDQRENCGEKMDHFLQRCFYHSGQYNSEDDFSGLDCKLKEKEAGRLQNRLFYLSIPPNIFVDVVRCVSHRASSASGWTRVIVEKPFGRDSDSSRELTRSFKQYLSEDQIFRIDHYLGKELVENLSVLRFSNLVFEPLWSRNYIRNVQLIFSEDFGTEGRGGYFDNYGIIRDIMQNHLLQILALFAMETPVSLDAEDIRNEKVKVLRSMKPLKLQDVVVGQYKGHSKGNKSYSGYTDDPTVPNNSVTPTFAAAALFIDNARWDGVPFLMKAGKALHTKRAEIRVQFRHVPGNLYKKTFGTDLDKATNELVLRVQPDEAIYLKINNKVPGLGMRLDRTDLNLCYSTRYRGEIPDAYERLLLDAIEGERRLFIRSDKLDAAWSLFTPLLKELEEKKVAPELYPYGSRGPVGAHYLAAKHNVRWGDLSGEDS.

NADP(+)-binding positions include 93–100 (GASGDLAK) and Arg-127. Cys-145 and Cys-153 are oxidised to a cystine. Lys-230 contacts NADP(+). D-glucose 6-phosphate is bound by residues Lys-230, 260 to 264 (HYLGK), Glu-298, and Asp-317. The active-site Proton acceptor is His-322. Lys-415 lines the NADP(+) pocket. The D-glucose 6-phosphate site is built by Lys-418 and Lys-423. NADP(+) is bound by residues Arg-424, Arg-428, and Arg-457. Gln-459 lines the D-glucose 6-phosphate pocket. Residues 465–467 (YLK) and Arg-550 contribute to the NADP(+) site.

The protein belongs to the glucose-6-phosphate dehydrogenase family. As to quaternary structure, homodimer.

It is found in the plastid. The protein localises to the chloroplast. It carries out the reaction D-glucose 6-phosphate + NADP(+) = 6-phospho-D-glucono-1,5-lactone + NADPH + H(+). It functions in the pathway carbohydrate degradation; pentose phosphate pathway; D-ribulose 5-phosphate from D-glucose 6-phosphate (oxidative stage): step 1/3. Regulated by metabolites. Post-translationally inactivated by cysteine-mediated redox modification via the ferredoxin-thioredoxin system in the light and this avoids futile cycles with photosynthetic CO2 fixation. Functionally, catalyzes the rate-limiting step of the oxidative pentose-phosphate pathway, which represents a route for the dissimilation of carbohydrates besides glycolysis. The main function of this enzyme is to provide reducing power (NADPH) and pentose phosphates for fatty acid and nucleic acid synthesis which are involved in membrane synthesis and cell division. This Spinacia oleracea (Spinach) protein is Glucose-6-phosphate 1-dehydrogenase, chloroplastic (G6PD).